A 213-amino-acid chain; its full sequence is 3-dehydroquinate dehydratase (213 aa).

Residues 27–29 (EVR) and arginine 53 each bind 3-dehydroquinate. Catalysis depends on histidine 111, which acts as the Proton donor/acceptor. The active-site Schiff-base intermediate with substrate is the lysine 138. 3-dehydroquinate is bound by residues arginine 175 and glutamine 197.

This sequence belongs to the type-I 3-dehydroquinase family. As to quaternary structure, homodimer.

The enzyme catalyses 3-dehydroquinate = 3-dehydroshikimate + H2O. It participates in metabolic intermediate biosynthesis; chorismate biosynthesis; chorismate from D-erythrose 4-phosphate and phosphoenolpyruvate: step 3/7. Functionally, involved in the third step of the chorismate pathway, which leads to the biosynthesis of aromatic amino acids. Catalyzes the cis-dehydration of 3-dehydroquinate (DHQ) and introduces the first double bond of the aromatic ring to yield 3-dehydroshikimate. This Thermococcus gammatolerans (strain DSM 15229 / JCM 11827 / EJ3) protein is 3-dehydroquinate dehydratase.